Consider the following 731-residue polypeptide: Catalase-peroxidase (731 aa).

The tryptophyl-tyrosyl-methioninium (Trp-Tyr) (with M-254) cross-link spans 98–227 (WHAAGTYRTA…LAAIQMGLIY (130 aa)). The active-site Proton acceptor is the histidine 99. Positions 227-254 (YVNPEGPQGNPHDDEGMARDMKETFKRM) form a cross-link, tryptophyl-tyrosyl-methioninium (Tyr-Met) (with W-98). Histidine 269 serves as a coordination point for heme b.

Belongs to the peroxidase family. Peroxidase/catalase subfamily. Homodimer or homotetramer. Heme b serves as cofactor. Post-translationally, formation of the three residue Trp-Tyr-Met cross-link is important for the catalase, but not the peroxidase activity of the enzyme.

It catalyses the reaction H2O2 + AH2 = A + 2 H2O. It carries out the reaction 2 H2O2 = O2 + 2 H2O. In terms of biological role, bifunctional enzyme with both catalase and broad-spectrum peroxidase activity. This Sphingopyxis alaskensis (strain DSM 13593 / LMG 18877 / RB2256) (Sphingomonas alaskensis) protein is Catalase-peroxidase.